The following is a 581-amino-acid chain: Putative carboxypeptidase YOL153C (581 aa).

The Cytoplasmic segment spans residues 1–29 (MTETHHAPLPDVYPSSKQPTSSTYSKCKK). K17 participates in a covalent cross-link: Glycyl lysine isopeptide (Lys-Gly) (interchain with G-Cter in ubiquitin). The helical; Signal-anchor for type II membrane protein transmembrane segment at 30 to 46 (FGLPLIGLLTLLLAYIS) threads the bilayer. Residues 47–581 (SFTKPVPNST…IVNVNEYGHD (535 aa)) are Extracellular-facing. 2 N-linked (GlcNAc...) asparagine glycosylation sites follow: N54 and N76. H170 serves as a coordination point for Zn(2+). D172 is a catalytic residue. Residue D207 participates in Zn(2+) binding. E241 (proton acceptor) is an active-site residue. Residues E242 and D270 each contribute to the Zn(2+) site. N-linked (GlcNAc...) asparagine glycosylation is found at N335 and N428. Zn(2+) is bound at residue H550.

Belongs to the peptidase M20A family. The cofactor is Zn(2+).

Its subcellular location is the membrane. The chain is Putative carboxypeptidase YOL153C from Saccharomyces cerevisiae (strain ATCC 204508 / S288c) (Baker's yeast).